The following is a 206-amino-acid chain: Thymidylate kinase (206 aa).

10–17 (GVDGVGKT) lines the ATP pocket.

Belongs to the thymidylate kinase family.

It carries out the reaction dTMP + ATP = dTDP + ADP. Its function is as follows. Phosphorylation of dTMP to form dTDP in both de novo and salvage pathways of dTTP synthesis. The chain is Thymidylate kinase from Bifidobacterium longum (strain DJO10A).